The chain runs to 158 residues: 6,7-dimethyl-8-ribityllumazine synthase (158 aa).

Residues Phe-23, Ser-61–Glu-63, and Ala-85–Ile-87 each bind 5-amino-6-(D-ribitylamino)uracil. (2S)-2-hydroxy-3-oxobutyl phosphate is bound at residue Asp-90–Thr-91. His-93 functions as the Proton donor in the catalytic mechanism. Tyr-118 contacts 5-amino-6-(D-ribitylamino)uracil. Arg-132 contacts (2S)-2-hydroxy-3-oxobutyl phosphate.

The protein belongs to the DMRL synthase family.

The enzyme catalyses (2S)-2-hydroxy-3-oxobutyl phosphate + 5-amino-6-(D-ribitylamino)uracil = 6,7-dimethyl-8-(1-D-ribityl)lumazine + phosphate + 2 H2O + H(+). It participates in cofactor biosynthesis; riboflavin biosynthesis; riboflavin from 2-hydroxy-3-oxobutyl phosphate and 5-amino-6-(D-ribitylamino)uracil: step 1/2. Catalyzes the formation of 6,7-dimethyl-8-ribityllumazine by condensation of 5-amino-6-(D-ribitylamino)uracil with 3,4-dihydroxy-2-butanone 4-phosphate. This is the penultimate step in the biosynthesis of riboflavin. The sequence is that of 6,7-dimethyl-8-ribityllumazine synthase from Prochlorococcus marinus (strain MIT 9211).